A 32-amino-acid chain; its full sequence is Ranatuerin-2La (32 aa).

Cys-27 and Cys-32 are disulfide-bonded.

As to expression, expressed by the skin glands.

Its subcellular location is the secreted. Antibacterial activity against Gram-positive bacterium S.aureus and Gram-negative bacterium E.coli. Weak activity against C.albicans. In Rana luteiventris (Columbia spotted frog), this protein is Ranatuerin-2La.